The sequence spans 873 residues: DNA helicase/primase complex-associated protein (873 aa).

Residues 394–422 form a disordered region; sequence PPLPRDDGDGENNVVEVSSSTGGAHPPSD.

It belongs to the herpesviridae HEPA family. As to quaternary structure, associates with the primase and the helicase to form the helicase-primase complex. Interacts with the origin-binding protein. Interacts with the polymerase catalytic subunit.

It is found in the host nucleus. In terms of biological role, component of the helicase/primase complex. Unwinds the DNA at the replication forks and generates single-stranded DNA for both leading and lagging strand synthesis. The primase synthesizes short RNA primers on the lagging strand that the polymerase presumably elongates using dNTPs. The primase-associated factor has no known catalytic activity in the complex and may serve to facilitate the formation of the replisome by directly interacting with the origin-binding protein and the polymerase. In Human cytomegalovirus (strain Merlin) (HHV-5), this protein is DNA helicase/primase complex-associated protein (UL102).